A 125-amino-acid polypeptide reads, in one-letter code: MRHYEIVFMVHPDQSEQVPGMIERYTSSIKEAGGQIHRLEDWGRRQLAYPINKLHKAHYVLMNVEAPQEVIDELETTFRYNDAVLRNVIIRTKHAVTEASPMVKAREERKPLTEVENNDFEDAEE.

The interval 100–125 is disordered; the sequence is SPMVKAREERKPLTEVENNDFEDAEE. Over residues 104 to 113 the composition is skewed to basic and acidic residues; it reads KAREERKPLT. Acidic residues predominate over residues 116-125; the sequence is ENNDFEDAEE.

Belongs to the bacterial ribosomal protein bS6 family.

Functionally, binds together with bS18 to 16S ribosomal RNA. The protein is Small ribosomal subunit protein bS6 of Histophilus somni (strain 129Pt) (Haemophilus somnus).